Consider the following 98-residue polypeptide: NADH-ubiquinone oxidoreductase chain 4L (98 aa).

Helical transmembrane passes span 1–21, 28–48, and 61–81; these read MEQI…GVLT, STLL…VLLI, and LILL…LVTI.

The protein belongs to the complex I subunit 4L family. In terms of assembly, core subunit of respiratory chain NADH dehydrogenase (Complex I) which is composed of 45 different subunits.

It localises to the mitochondrion inner membrane. The enzyme catalyses a ubiquinone + NADH + 5 H(+)(in) = a ubiquinol + NAD(+) + 4 H(+)(out). Core subunit of the mitochondrial membrane respiratory chain NADH dehydrogenase (Complex I) which catalyzes electron transfer from NADH through the respiratory chain, using ubiquinone as an electron acceptor. Part of the enzyme membrane arm which is embedded in the lipid bilayer and involved in proton translocation. The protein is NADH-ubiquinone oxidoreductase chain 4L (MT-ND4L) of Monodelphis domestica (Gray short-tailed opossum).